The primary structure comprises 877 residues: DNA mismatch repair protein MutS (877 aa).

627–634 (GPNMAGKS) provides a ligand contact to ATP.

This sequence belongs to the DNA mismatch repair MutS family.

Its function is as follows. This protein is involved in the repair of mismatches in DNA. It is possible that it carries out the mismatch recognition step. This protein has a weak ATPase activity. This chain is DNA mismatch repair protein MutS, found in Dinoroseobacter shibae (strain DSM 16493 / NCIMB 14021 / DFL 12).